The primary structure comprises 254 residues: MNQFLFVSFCALLGLSQVSAATLSSGRIVGGFQIDIAEVPHQVSLQRSGRHFCGGSIISPRWVLTAAHCTTNTDPAAYTIRAGSTDRTNGGIIVKVKSVIPHPQYNGDTYNYDFSLLELDESIGFSRSIEAIALPEASETVADGAMCTVSGWGDTKNVFEMNTLLRAVNVPSYNQAECAAALVNVVPVTEQMICAGYAAGGKDSCQGDSGGPLVSGDKLVGVVSWGKGCALPNLPGVYARVSTVRQWIREVSEV.

The first 20 residues, 1–20, serve as a signal peptide directing secretion; sequence MNQFLFVSFCALLGLSQVSA. A propeptide spans 21 to 27 (activation peptide); that stretch reads ATLSSGR. Residues 28–253 form the Peptidase S1 domain; that stretch reads IVGGFQIDIA…VRQWIREVSE (226 aa). A disulfide bridge connects residues cysteine 53 and cysteine 69. Residues histidine 68 and aspartate 113 each act as charge relay system in the active site. Disulfide bonds link cysteine 178–cysteine 194 and cysteine 205–cysteine 229. The active-site Charge relay system is serine 209.

Belongs to the peptidase S1 family. Midgut.

Its subcellular location is the secreted. It localises to the extracellular space. It carries out the reaction Preferential cleavage: Arg-|-Xaa, Lys-|-Xaa.. In terms of biological role, major function may be to aid in digestion of the blood meal. This chain is Trypsin 3A1, found in Aedes aegypti (Yellowfever mosquito).